Here is a 57-residue protein sequence, read N- to C-terminus: Small ribosomal subunit protein bS21 (57 aa).

The interval 24-57 (SKSGTLQESRKREFYEKPSVKRKKKSEAARKRKF) is disordered. Basic and acidic residues predominate over residues 31–42 (ESRKREFYEKPS). Residues 43 to 57 (VKRKKKSEAARKRKF) are compositionally biased toward basic residues.

Belongs to the bacterial ribosomal protein bS21 family.

This Listeria innocua serovar 6a (strain ATCC BAA-680 / CLIP 11262) protein is Small ribosomal subunit protein bS21 (rpsU).